An 829-amino-acid polypeptide reads, in one-letter code: MDKEKSDPSCKSSDLKISNISIQVVSVPGKLPGRRPPRKPIGKPRPRKQPKKRAPFWNVQNKIILFTVFLFILAVTAWTLLWLYISKTESKDAFYFVGMFRITNIEFLPEYRQKESREFLSMAKTVQQVVNLVYTTSAFSKFYKQSVVADVSSNNKGGLLVHFWIVFVMPHAKGHIFCEECVAAILKDSIQTSIINRTSVGSLQGLAVDMDSVVLNAGLRSDYSSAVGSDNGCSRYLYADHLTLRYPLEISATSGQLMCHFKLVAIVGYLIRLSIESIQLEADNCITDSLTVYDSLLPIRSAILYRICEPTRTLMSFVSTNNLMLVILKSPYVRRLAGIRAYFEVIPEQKCESTILVKEINSFEGKISSPYYPSYYPPKCKCTWTFQTSLSTLGIALKFYNYSITKKSAKGCEHGWWEINEHMYCGSYMDHETIFRVPSPLVHIQLQCSSRLSDKPLLVEYGGYNISQPCPAGSFRCSSGLCVPQAQRCDGVNDCFDESDELFCVTVKPACNSSSFRQHGPLVCDGFRDCEDGQDEQNCTRSIPCTSRTFKCGNDICFRKQNAQCDGIVDCPDGSDEEGCGCSRSSSFLHRIVGGSDSQEGTWPWQVSLHFVGSAYCGASVISREWLLSAAHCFHGNRLSDPTPWTAHLGMYVQGNAKFISPVRRIVVHEYYNSQTFDYDIALLQLSIAWPETLKQLIQPICIPPAGQKVRSGEKCWVTGWGRRHEADSKGSPVLQQAEVELIDQTVCVSTYGIITSRMLCAGVMSGKSDACKGDSGGPLSCRRKSDGKWILTGIVSWGHGCGRPNFPGVYTRVSSFVPWIHKYVPSLL.

The Cytoplasmic portion of the chain corresponds to 1 to 62; it reads MDKEKSDPSC…RAPFWNVQNK (62 aa). Residues 26–52 are disordered; sequence SVPGKLPGRRPPRKPIGKPRPRKQPKK. Positions 32 to 52 are enriched in basic residues; the sequence is PGRRPPRKPIGKPRPRKQPKK. A helical; Signal-anchor for type II membrane protein membrane pass occupies residues 63 to 83; it reads IILFTVFLFILAVTAWTLLWL. The Extracellular portion of the chain corresponds to 84–829; it reads YISKTESKDA…WIHKYVPSLL (746 aa). In terms of domain architecture, SEA spans 92 to 220; that stretch reads DAFYFVGMFR…DSVVLNAGLR (129 aa). 3 disulfides stabilise this stretch: Cys233-Cys259, Cys285-Cys308, and Cys351-Cys382. CUB domains follow at residues 233 to 346 and 351 to 467; these read CSRY…FEVI and CEST…YNIS. Residues Asn401 and Asn465 are each glycosylated (N-linked (GlcNAc...) asparagine). 3 consecutive LDL-receptor class A domains span residues 469-505, 503-540, and 544-581; these read PCPA…LFCV, FCVT…QNCT, and PCTS…EGCG. 9 disulfides stabilise this stretch: Cys470/Cys482, Cys477/Cys495, Cys489/Cys504, Cys511/Cys530, Cys524/Cys539, Cys545/Cys557, Cys552/Cys571, Cys565/Cys580, and Cys617/Cys633. Positions 592–826 constitute a Peptidase S1 domain; it reads IVGGSDSQEG…FVPWIHKYVP (235 aa). Catalysis depends on charge relay system residues His632 and Asp680. 3 disulfide bridges follow: Cys716-Cys782, Cys748-Cys761, and Cys772-Cys802. Ser776 functions as the Charge relay system in the catalytic mechanism.

The protein belongs to the peptidase S1 family. As to quaternary structure, forms a heterodimer with SERPINA5. In terms of processing, N-glycosylated. Expressed in brain, eye, testis, skin, epididymis and salivary gland with lower levels in heart, skeletal muscle, thymus, ovary, prostate and uterus.

The protein resides in the cell membrane. Its function is as follows. Serine protease which preferentially hydrolyzes peptides with Arg at the P1 position. This chain is Transmembrane protease serine 7 (Tmprss7), found in Mus musculus (Mouse).